The primary structure comprises 343 residues: Ferredoxin--NADP reductase (343 aa).

Aspartate 36, glutamine 44, tyrosine 49, valine 89, phenylalanine 124, aspartate 289, and threonine 330 together coordinate FAD.

Belongs to the ferredoxin--NADP reductase type 2 family. As to quaternary structure, homodimer. It depends on FAD as a cofactor.

It catalyses the reaction 2 reduced [2Fe-2S]-[ferredoxin] + NADP(+) + H(+) = 2 oxidized [2Fe-2S]-[ferredoxin] + NADPH. In Mesorhizobium japonicum (strain LMG 29417 / CECT 9101 / MAFF 303099) (Mesorhizobium loti (strain MAFF 303099)), this protein is Ferredoxin--NADP reductase.